We begin with the raw amino-acid sequence, 89 residues long: Small ribosomal subunit protein uS17 (89 aa).

It belongs to the universal ribosomal protein uS17 family. As to quaternary structure, part of the 30S ribosomal subunit.

One of the primary rRNA binding proteins, it binds specifically to the 5'-end of 16S ribosomal RNA. This is Small ribosomal subunit protein uS17 from Leptospira interrogans serogroup Icterohaemorrhagiae serovar Lai (strain 56601).